Reading from the N-terminus, the 128-residue chain is Large ribosomal subunit protein bL17 (128 aa).

This sequence belongs to the bacterial ribosomal protein bL17 family. As to quaternary structure, part of the 50S ribosomal subunit. Contacts protein L32.

The chain is Large ribosomal subunit protein bL17 from Petrotoga mobilis (strain DSM 10674 / SJ95).